The chain runs to 1247 residues: SAM and SH3 domain-containing protein 1 (1247 aa).

Positions 1–39 are disordered; it reads MEDAGAAGPGPEPEPEPEPEPEPAPEPEPEPKPGAGTSE. The span at 13 to 28 shows a compositional bias: acidic residues; sequence PEPEPEPEPEPAPEPE. Position 90 is a phosphoserine (S90). Disordered stretches follow at residues 126–145, 221–257, and 316–344; these read VERK…VGKG, AALD…ESVK, and FFDG…LDTW. S248 bears the Phosphoserine mark. Over residues 331-343 the composition is skewed to low complexity; it reads SLTTSPSSSSLDT. At S407 the chain carries Phosphoserine. The disordered stretch occupies residues 449 to 573; it reads SLGKKVKSVK…DFTPSPYDTD (125 aa). Composition is skewed to low complexity over residues 468–484 and 505–523; these read KYSS…DGMP and GGSV…SMSG. The segment covering 524–536 has biased composition (polar residues); the sequence is QTVSTTDSSTSNR. Residues 554 to 615 enclose the SH3 domain; that stretch reads PFCGRARVHT…KFIYVDVLSE (62 aa). At S614 the chain carries Phosphoserine. Disordered stretches follow at residues 616–639 and 713–810; these read DEEK…KSVE and DSQG…LNKN. Basic residues predominate over residues 622–631; sequence RPTRRRRKGR. In terms of domain architecture, SAM 1 spans 633–697; it reads PQPKSVEDLL…LTAVELLQEY (65 aa). The span at 746-765 shows a compositional bias: polar residues; sequence SAKSSTEPSLKSFSRNQLGN. A phosphoserine mark is found at S821 and S839. Disordered stretches follow at residues 846-884, 903-946, and 971-1065; these read EPGA…PLEQ, PQKL…LART, and DAEQ…SELP. Residues 852–860 are required for interaction with TRAF6; it reads DVPTEVTEP. At T858 the chain carries Phosphothreonine. Pro residues predominate over residues 1050–1060; the sequence is GSPPSTRPPPW. One can recognise an SAM 2 domain in the interval 1177–1241; the sequence is GCISSVSDWL…LSAARLFKLP (65 aa).

As to quaternary structure, interacts with GNAS. Interacts with IQGAP1. Interacts with TRAF6 (via C-terminus); the interaction is LPS-dependent. Interacts with MAP3K7, CHUK and IKBKB. As to expression, expressed ubiquitously, with highest levels in lung, placenta, spleen and thymus. Down-regulated in the majority (74%) of breast tumors in comparison with corresponding normal breast epithelial tissues. Expressed in the epidermis, epidermal keratinocytes, dermal fibroblasts and melanocytes.

It is found in the cytoplasm. Functionally, is a positive regulator of NF-kappa-B signaling downstream of TLR4 activation. It acts as a scaffold molecule to assemble a molecular complex that includes TRAF6, MAP3K7, CHUK and IKBKB, thereby facilitating NF-kappa-B signaling activation. Regulates TRAF6 and MAP3K7 ubiquitination. Involved in the regulation of cell mobility. Regulates lipolysaccharide (LPS)-induced endothelial cell migration. Is involved in the regulation of skin pigmentation through the control of melanocyte migration in the epidermis. In Homo sapiens (Human), this protein is SAM and SH3 domain-containing protein 1 (SASH1).